The chain runs to 243 residues: Outer membrane protein A (243 aa).

Beta stranded transmembrane passes span 1–8 (LTAKLGYP), 13–21 (LDIYTRLGG), 48–57 (PVFAGGVEWA), 62–69 (IATRLEYQ), and 88–96 (LLSLGVSYR). 4 repeat units span residues 107–108 (AP), 109–110 (AP), 111–112 (AP), and 113–114 (AP). The segment at 107 to 114 (APAPAPAP) is 4 X 2 AA tandem repeats of A-P. An OmpA-like domain is found at 116–243 (VQTKHFTLKS…RRVEIEVKGI (128 aa)). Cysteines 217 and 229 form a disulfide.

It belongs to the outer membrane OOP (TC 1.B.6) superfamily. OmpA family. In terms of assembly, monomer and homodimer.

Its subcellular location is the cell outer membrane. Its function is as follows. With TolR probably plays a role in maintaining the position of the peptidoglycan cell wall in the periplasm. Acts as a porin with low permeability that allows slow penetration of small solutes; an internal gate slows down solute passage. Required for conjugation with F-type plasmids; probably serves as the mating receptor on recipient cells. The protein is Outer membrane protein A of Escherichia fergusonii.